Reading from the N-terminus, the 662-residue chain is Biosynthetic arginine decarboxylase (662 aa).

Position 127 is an N6-(pyridoxal phosphate)lysine (Lys-127). 307 to 317 (FDVGGGLGVDY) is a substrate binding site.

It belongs to the Orn/Lys/Arg decarboxylase class-II family. SpeA subfamily. Homotetramer. It depends on Mg(2+) as a cofactor. The cofactor is pyridoxal 5'-phosphate.

The protein resides in the periplasm. It catalyses the reaction L-arginine + H(+) = agmatine + CO2. Its pathway is amine and polyamine biosynthesis; agmatine biosynthesis; agmatine from L-arginine: step 1/1. Functionally, catalyzes the biosynthesis of agmatine from arginine. This is Biosynthetic arginine decarboxylase from Shigella flexneri.